An 872-amino-acid chain; its full sequence is Metabotropic glutamate receptor 2 (872 aa).

The signal sequence occupies residues 1 to 18 (MESLLGFLALLLLWGAVA). Residues 19–567 (EGPAKKVLTL…QEYIRWGDAW (549 aa)) are Extracellular-facing. A disulfide bond links cysteine 50 and cysteine 92. 5 residues coordinate L-glutamate: arginine 57, arginine 61, serine 145, alanine 166, and threonine 168. N-linked (GlcNAc...) asparagine glycosylation is found at asparagine 203 and asparagine 286. 7 disulfide bridges follow: cysteine 234–cysteine 518, cysteine 355–cysteine 362, cysteine 400–cysteine 407, cysteine 500–cysteine 519, cysteine 504–cysteine 522, cysteine 525–cysteine 537, and cysteine 540–cysteine 553. Residue aspartate 295 participates in L-glutamate binding. A glycan (N-linked (GlcNAc...) asparagine) is linked at asparagine 338. Lysine 377 lines the L-glutamate pocket. N-linked (GlcNAc...) asparagine glycosylation occurs at asparagine 402. A glycan (N-linked (GlcNAc...) asparagine) is linked at asparagine 547. A helical membrane pass occupies residues 568–590 (AVGPVTIACLGALATLFVLGVFV). Topologically, residues 591 to 604 (RHNATPVVKASGRE) are cytoplasmic. Residues 605–625 (LCYILLGGVFLCYCMTFVFIA) traverse the membrane as a helical segment. The Extracellular portion of the chain corresponds to 626–636 (KPSTAVCTLRR). A disulfide bridge links cysteine 632 with cysteine 721. A helical transmembrane segment spans residues 637–655 (LGLGTAFSVCYSALLTKTN). Over 656–679 (RIARIFGGAREGAQRPRFISPASQ) the chain is Cytoplasmic. Positions 677 to 685 (ASQVAICLA) are important for interaction with HTR2A. Residues 680 to 700 (VAICLALISGQLLIVAAWLVV) form a helical membrane-spanning segment. Over 701–725 (EAPGTGKETAPERREVVTLRCNHRD) the chain is Extracellular. Residues 726–747 (ASMLGSLAYNVLLIALCTLYAF) form a helical membrane-spanning segment. The Cytoplasmic segment spans residues 748–760 (KTRKCPENFNEAK). Residues 761–783 (FIGFTMYTTCIIWLAFLPIFYVT) form a helical membrane-spanning segment. The Extracellular portion of the chain corresponds to 784 to 793 (SSDYRVQTTT). A helical transmembrane segment spans residues 794–819 (MCVSVSLSGSVVLGCLFAPKLHIILF). At 820-872 (QPQKNVVSHRAPTSRFGSAAPRASANLGQGSGSQFVPTVCNGREVVDSTTSSL) the chain is on the cytoplasmic side.

This sequence belongs to the G-protein coupled receptor 3 family. As to quaternary structure, forms heterodimers with GRM3 or GRM4. Interacts with GNAI1. Interacts with TAMALIN. Interacts with HTR2A. Is widely distributed in the CNS and prominent expression is seen in Golgi cells of the cerebellum and some particular neuronal cells in other brain regions.

It is found in the cell membrane. The protein resides in the synapse. It localises to the cell projection. Its subcellular location is the dendrite. Its function is as follows. Dimeric G protein-coupled receptor which is activated by the excitatory neurotransmitter L-glutamate. Plays critical roles in modulating synaptic transmission and neuronal excitability. Upon activation by glutamate, inhibits presynaptic calcium channels, reducing further glutamate release and dampening excitatory signaling. Mechanistically, ligand binding causes a conformation change that triggers signaling via guanine nucleotide-binding proteins (G proteins) and modulates the activity of down-stream effectors, such as adenylate cyclase. May mediate suppression of neurotransmission or may be involved in synaptogenesis or synaptic stabilization. The polypeptide is Metabotropic glutamate receptor 2 (Grm2) (Rattus norvegicus (Rat)).